The following is a 32-amino-acid chain: Delta-conotoxin-like CnVIC (32 aa).

3 disulfides stabilise this stretch: cysteine 3-cysteine 18, cysteine 10-cysteine 22, and cysteine 17-cysteine 27. 2 positions are modified to 4-hydroxyproline: proline 6 and proline 14.

Belongs to the conotoxin O1 superfamily. In terms of tissue distribution, expressed by the venom duct.

It is found in the secreted. Its function is as follows. Delta-conotoxins bind to site 6 of voltage-gated sodium channels (Nav) and inhibit the inactivation process. This toxin acts on Nav1.2/SCN2A, Nav1.4/SCN4A, Nav1.5/SCN5A (weak activity), Nav1.6/SCN8A (EC(50)=2.5 uM). This Conus consors (Singed cone) protein is Delta-conotoxin-like CnVIC.